Consider the following 566-residue polypeptide: Proline--tRNA ligase (566 aa).

It belongs to the class-II aminoacyl-tRNA synthetase family. ProS type 1 subfamily. Homodimer.

The protein resides in the cytoplasm. It carries out the reaction tRNA(Pro) + L-proline + ATP = L-prolyl-tRNA(Pro) + AMP + diphosphate. Functionally, catalyzes the attachment of proline to tRNA(Pro) in a two-step reaction: proline is first activated by ATP to form Pro-AMP and then transferred to the acceptor end of tRNA(Pro). As ProRS can inadvertently accommodate and process non-cognate amino acids such as alanine and cysteine, to avoid such errors it has two additional distinct editing activities against alanine. One activity is designated as 'pretransfer' editing and involves the tRNA(Pro)-independent hydrolysis of activated Ala-AMP. The other activity is designated 'posttransfer' editing and involves deacylation of mischarged Ala-tRNA(Pro). The misacylated Cys-tRNA(Pro) is not edited by ProRS. This Coxiella burnetii (strain RSA 493 / Nine Mile phase I) protein is Proline--tRNA ligase.